A 163-amino-acid polypeptide reads, in one-letter code: Phospholipase A2 homolog 3 (163 aa).

The first 43 residues, 1-43 (MARGGSFSRLRLRAGVVVAAAAAALLLFAVVAPPAAALNIGLQ), serve as a signal peptide directing secretion. 6 disulfides stabilise this stretch: C55–C83, C59–C89, C64–C137, C76–C96, C95–C121, and C102–C114. Positions 75, 77, and 80 each coordinate Ca(2+). Residue H99 is part of the active site. Position 100 (D100) interacts with Ca(2+).

The protein belongs to the phospholipase A2 family. Requires Ca(2+) as cofactor.

Its subcellular location is the secreted. It catalyses the reaction a 1,2-diacyl-sn-glycero-3-phosphocholine + H2O = a 1-acyl-sn-glycero-3-phosphocholine + a fatty acid + H(+). Its activity is regulated as follows. Inhibited by EGTA. In terms of biological role, PA2 catalyzes the calcium-dependent hydrolysis of the 2-acyl groups in 3-sn-phosphoglycerides. Releases lysophospholipids (LPLs) and free fatty acids (FFAs) from membrane phospholipids in response to hormones and other external stimuli. The polypeptide is Phospholipase A2 homolog 3 (PLA2-III) (Oryza sativa subsp. japonica (Rice)).